The chain runs to 389 residues: Chalcone synthase 3 (389 aa).

C164 is a catalytic residue.

The protein belongs to the thiolase-like superfamily. Chalcone/stilbene synthases family.

It catalyses the reaction (E)-4-coumaroyl-CoA + 3 malonyl-CoA + 3 H(+) = 2',4,4',6'-tetrahydroxychalcone + 3 CO2 + 4 CoA. Its pathway is secondary metabolite biosynthesis; flavonoid biosynthesis. Its function is as follows. The primary product of this enzyme is 4,2',4',6'-tetrahydroxychalcone (also termed naringenin-chalcone or chalcone) which can under specific conditions spontaneously isomerize into naringenin. In Camellia sinensis (Tea plant), this protein is Chalcone synthase 3 (CHS3).